The chain runs to 901 residues: Protein translocase subunit SecA (901 aa).

Residues glutamine 87, 105 to 109, and aspartate 512 contribute to the ATP site; that span reads GEGKT. Positions 885, 887, 896, and 897 each coordinate Zn(2+).

This sequence belongs to the SecA family. As to quaternary structure, monomer and homodimer. Part of the essential Sec protein translocation apparatus which comprises SecA, SecYEG and auxiliary proteins SecDF-YajC and YidC. It depends on Zn(2+) as a cofactor.

Its subcellular location is the cell inner membrane. The protein localises to the cytoplasm. The enzyme catalyses ATP + H2O + cellular proteinSide 1 = ADP + phosphate + cellular proteinSide 2.. Functionally, part of the Sec protein translocase complex. Interacts with the SecYEG preprotein conducting channel. Has a central role in coupling the hydrolysis of ATP to the transfer of proteins into and across the cell membrane, serving both as a receptor for the preprotein-SecB complex and as an ATP-driven molecular motor driving the stepwise translocation of polypeptide chains across the membrane. This chain is Protein translocase subunit SecA, found in Salmonella arizonae (strain ATCC BAA-731 / CDC346-86 / RSK2980).